Here is a 60-residue protein sequence, read N- to C-terminus: CAMPATH-1 antigen (60 aa).

The N-terminal stretch at 1-24 is a signal peptide; sequence MKRFLFLLLTISLLVMVQIQTGVT. N27 carries an N-linked (GlcNAc...) asparagine glycan. A lipid anchor (GPI-anchor amidated serine) is attached at S35. Residues 36-60 constitute a propeptide, removed in mature form; the sequence is ASSNLSGGGFLFFVANAIIHLFYFS. N39 carries N-linked (GlcNAc...) asparagine glycosylation.

It is found in the cell membrane. Functionally, may play a role in carrying and orienting carbohydrate, as well as having a more specific role. The polypeptide is CAMPATH-1 antigen (CD52) (Macaca fascicularis (Crab-eating macaque)).